Here is a 181-residue protein sequence, read N- to C-terminus: Cyclic AMP-dependent transcription factor ATF-3 (181 aa).

Residues 76 to 97 (VTKAEVAPEEDERKKRRRERNK) form a disordered region. Lys78 participates in a covalent cross-link: Glycyl lysine isopeptide (Lys-Gly) (interchain with G-Cter in SUMO2). The bZIP domain occupies 86-149 (DERKKRRRER…QHLIYMLNLH (64 aa)). Positions 88-110 (RKKRRRERNKIAAAKCRNKKKEK) are basic motif. The leucine-zipper stretch occupies residues 114–142 (LQKESEKLESVNAELKAQIEELKNEKQHL). The residue at position 162 (Thr162) is a Phosphothreonine. Lys175 is covalently cross-linked (Glycyl lysine isopeptide (Lys-Gly) (interchain with G-Cter in SUMO2)).

This sequence belongs to the bZIP family. ATF subfamily. In terms of assembly, binds DNA as a homodimer or a heterodimer. Interacts with KAT5; promoting KAT5 autoacetylation and KAT5 deubiquitination by USP7.

It localises to the nucleus. Functionally, this protein binds the cAMP response element (CRE) (consensus: 5'-GTGACGT[AC][AG]-3'), a sequence present in many viral and cellular promoters. Represses transcription from promoters with ATF sites. It may repress transcription by stabilizing the binding of inhibitory cofactors at the promoter. The chain is Cyclic AMP-dependent transcription factor ATF-3 (ATF3) from Bos taurus (Bovine).